A 145-amino-acid polypeptide reads, in one-letter code: uncharacterized protein (145 aa).

Disordered regions lie at residues 1–41 and 122–145; these read MRRL…PPGT and RLPSLVHGPSHPDSQHPREVPLAL. The segment covering 20–34 has biased composition (polar residues); it reads GGPQNGTSGCTTAPQ. The segment covering 134 to 145 has biased composition (basic and acidic residues); sequence DSQHPREVPLAL.

Ubiquitous.

This is an uncharacterized protein from Homo sapiens (Human).